Here is a 66-residue protein sequence, read N- to C-terminus: Beta-toxin Cb2 (66 aa).

One can recognise an LCN-type CS-alpha/beta domain in the interval 1–66 (KEGYLVDLHT…VWPLPNKRCK (66 aa)). 4 disulfides stabilise this stretch: Cys-12–Cys-65, Cys-16–Cys-41, Cys-25–Cys-46, and Cys-29–Cys-48.

Belongs to the long (4 C-C) scorpion toxin superfamily. Sodium channel inhibitor family. Beta subfamily. Expressed by the venom gland.

It is found in the secreted. In terms of biological role, beta toxins bind voltage-independently at site-4 of sodium channels (Nav) and reduces peak current and shifts the voltage of activation toward more negative potentials thereby affecting sodium channel activation and promoting spontaneous and repetitive firing. Has an inhibitory effect on voltage-gated sodium channel hNav1.6/SCN8A, affecting both the activation and inactivation processes. Also reduces the peak current of hNav1.5/SCN5A but does not shift its voltage of activation. This toxin is active against mammals and lethal to mice. The protein is Beta-toxin Cb2 of Centruroides baergi (Scorpion).